A 79-amino-acid chain; its full sequence is Omega-phylotoxin-To1a (79 aa).

Positions 1-21 are cleaved as a signal peptide; that stretch reads MKKTFCFILILVCIVLKSVNA. A propeptide spanning residues 22–38 is cleaved from the precursor; the sequence is EEEDNFEESSLEMETAR. Cystine bridges form between Cys-39/Cys-59, Cys-46/Cys-63, Cys-58/Cys-78, and Cys-65/Cys-76.

As to expression, expressed by the venom duct.

Its subcellular location is the secreted. Functionally, insect-specific toxin that probably acts as an inhibitor of presynaptic insect calcium channels, presumably Cav2 subtype. In vivo, induces immediate paralysis on insects, followed by death when high doses are injected. This is Omega-phylotoxin-To1a from Tibellus oblongus (Oblong running crab spider).